A 946-amino-acid polypeptide reads, in one-letter code: Probable outer membrane protein pmp18 (946 aa).

The first 16 residues, 1 to 16 (MQNNRSLSKSSFFVGA), serve as a signal peptide directing secretion. The 279-residue stretch at 668–946 (QGQIAPTASG…YLHAGTTFKF (279 aa)) folds into the Autotransporter domain.

Belongs to the PMP outer membrane protein family.

It localises to the secreted. It is found in the cell wall. The protein resides in the cell outer membrane. The sequence is that of Probable outer membrane protein pmp18 (pmp18) from Chlamydia pneumoniae (Chlamydophila pneumoniae).